Consider the following 353-residue polypeptide: N-terminal EF-hand calcium-binding protein 3 (353 aa).

Residues 27–62 (AGHALFQDVFRRADKNDDGKLSFEEFQNYFADGVLS) form the EF-hand domain. Residues Asp40, Asn42, Asp44, Lys46, and Glu51 each coordinate Ca(2+). Residues 172 to 181 (IKAQSRPCGS) form a required for interaction with APBA3 region. The segment covering 193-203 (SWSPSWSPGSS) has biased composition (low complexity). Residues 193–213 (SWSPSWSPGSSDTGRSSEAEQ) form a disordered region. Residues 204–213 (DTGRSSEAEQ) are compositionally biased toward polar residues. Residues 253-342 (LVAQRQVQVA…QAPDTLTTVF (90 aa)) form the ABM domain.

In terms of assembly, interacts with the N-terminal domain of APBA2. Interacts with NEK2. Interacts with APBA3; APBA3 seems to mediate the interaction between NECAB3 and HIF1AN. Post-translationally, phosphorylated by NEK2. In terms of tissue distribution, widely expressed, with highest levels in the brain.

The protein localises to the golgi apparatus. Its function is as follows. Inhibits the interaction of APBA2 with amyloid-beta precursor protein (APP), and hence allows formation of amyloid-beta. May enhance the activity of HIF1A and thus promote glycolysis under normoxic conditions; the function requires its ABM domain and may implicate the stabilization of the interaction between HIF1AN and APBA3. The polypeptide is N-terminal EF-hand calcium-binding protein 3 (Necab3) (Mus musculus (Mouse)).